Reading from the N-terminus, the 843-residue chain is Aminopeptidase N (843 aa).

Substrate-binding positions include Glu-120 and 252 to 256; that span reads GAMEN. Position 288 (His-288) interacts with Zn(2+). Glu-289 functions as the Proton acceptor in the catalytic mechanism. Zn(2+) is bound by residues His-292 and Glu-311.

This sequence belongs to the peptidase M1 family. As to quaternary structure, monomer. Zn(2+) is required as a cofactor.

It localises to the cytoplasm. It carries out the reaction Release of an N-terminal amino acid, Xaa-|-Yaa- from a peptide, amide or arylamide. Xaa is preferably Ala, but may be most amino acids including Pro (slow action). When a terminal hydrophobic residue is followed by a prolyl residue, the two may be released as an intact Xaa-Pro dipeptide.. Functionally, aminopeptidase with broad substrate specificity to several peptides. In Lactobacillus delbrueckii subsp. lactis, this protein is Aminopeptidase N (pepN).